The sequence spans 88 residues: EKC/KEOPS complex subunit SPAC4H3.13 (88 aa).

This sequence belongs to the CTAG/PCC1 family. Component of the EKC/KEOPS complex composed of at least of SPAP27G11.07c/BUD32, cgi121, gon7, pgp2 and SPAC4H3.13/PCC1; the whole complex dimerizes.

The protein resides in the cytoplasm. Its subcellular location is the nucleus. It is found in the chromosome. It localises to the telomere. In terms of biological role, component of the EKC/KEOPS complex that is required for the formation of a threonylcarbamoyl group on adenosine at position 37 (t(6)A37) in tRNAs that read codons beginning with adenine. The complex is probably involved in the transfer of the threonylcarbamoyl moiety of threonylcarbamoyl-AMP (TC-AMP) to the N6 group of A37. SPAC4H3.13/PCC1 functions as a dimerization module for the complex. The EKC/KEOPS complex also promotes both telomere uncapping and telomere elongation. The complex is required for efficient recruitment of transcriptional coactivators. The sequence is that of EKC/KEOPS complex subunit SPAC4H3.13 from Schizosaccharomyces pombe (strain 972 / ATCC 24843) (Fission yeast).